The sequence spans 386 residues: Patatin-17 (386 aa).

A signal peptide spans 1-23; the sequence is MATTKSFLILIFMILATTSSTFA. The PNPLA domain occupies 32–229; sequence LSIDGGGIRG…TVADPALLSI (198 aa). A GXGXXG motif is present at residues 36 to 41; the sequence is GGGIRG. The short motif at 75 to 79 is the GXSXG element; the sequence is GTSTG. Ser-77 acts as the Nucleophile in catalysis. N-linked (GlcNAc...) asparagine glycosylation is present at Asn-202. Catalysis depends on Asp-215, which acts as the Proton acceptor. The DGA/G signature appears at 215–217; the sequence is DGA. Residues 321–384 adopt a coiled-coil conformation; that stretch reads ENALTGTTTE…DRKKLRANKA (64 aa).

The protein belongs to the patatin family.

It is found in the vacuole. Non-specific lipolytic acyl hydrolase (LAH), an activity which is thought to be involved in the response of tubers to pathogens. Catalyzes the non-specific hydrolysis of phospholipids, glycolipids, sulfolipids, and mono- and diacylglycerols includng p-nitrophenyl caprate. Confers resistance to southern corn rootworm (SCRW). The chain is Patatin-17 from Solanum cardiophyllum (Heartleaf nightshade).